The primary structure comprises 597 residues: DDB1- and CUL4-associated factor 8 (597 aa).

Polar residues predominate over residues Met-1–Glu-24. Positions Met-1–Leu-147 are disordered. Ser-21 and Ser-22 each carry phosphoserine. Residues Ile-39–Leu-50 carry the Nuclear export signal motif. The segment covering Arg-65 to Ser-99 has biased composition (basic and acidic residues). The residue at position 99 (Ser-99) is a Phosphoserine. Acidic residues predominate over residues Glu-100–Glu-112. The Nuclear localization signal signature appears at Pro-114–Arg-122. Basic and acidic residues predominate over residues Asn-124–Glu-137. A phosphoserine mark is found at Ser-129 and Ser-130. 7 WD repeats span residues Gly-191–Asp-230, Gly-234–Asn-275, Gln-281–Lys-321, Glu-329–Asn-369, Glu-385–Tyr-424, Arg-432–Phe-472, and Asp-476–Leu-515. Arg-204 is subject to Omega-N-methylarginine; by PRMT1. The interval His-558–Ser-597 is disordered.

It belongs to the WD repeat DCAF8 family. As to quaternary structure, interacts with DDB1, CUL4A and CUL4B. Interacts with KPNA1, KPNB1 and XPO1.

It is found in the nucleus. Its subcellular location is the cytoplasm. The protein operates within protein modification; protein ubiquitination. Its function is as follows. May function as a substrate receptor for CUL4-DDB1 E3 ubiquitin-protein ligase complex. The sequence is that of DDB1- and CUL4-associated factor 8 (DCAF8) from Homo sapiens (Human).